Consider the following 336-residue polypeptide: Glyceraldehyde-3-phosphate dehydrogenase (336 aa).

Residues arginine 12–isoleucine 13, aspartate 34, and arginine 79 each bind NAD(+). Residues serine 150–threonine 152, threonine 181, threonine 210–glycine 211, and arginine 233 contribute to the D-glyceraldehyde 3-phosphate site. The Nucleophile role is filled by cysteine 151. Asparagine 315 is an NAD(+) binding site.

The protein belongs to the glyceraldehyde-3-phosphate dehydrogenase family. As to quaternary structure, homotetramer.

It is found in the cytoplasm. The catalysed reaction is D-glyceraldehyde 3-phosphate + phosphate + NAD(+) = (2R)-3-phospho-glyceroyl phosphate + NADH + H(+). Its pathway is carbohydrate degradation; glycolysis; pyruvate from D-glyceraldehyde 3-phosphate: step 1/5. This chain is Glyceraldehyde-3-phosphate dehydrogenase (gpdA), found in Aspergillus niger.